A 486-amino-acid chain; its full sequence is Matrilin-3 (486 aa).

An N-terminal signal peptide occupies residues 1 to 28 (MPRPAPARRLPGLLLLLWPLLLLPSAAP). A disordered region spans residues 32-75 (ARPGFRRLETRGPGGSPGRRPSPAAPDGAPASGTSEPGRARGAG). Over residues 49-64 (GRRPSPAAPDGAPASG) the composition is skewed to low complexity. A VWFA domain is found at 83 to 258 (DLVFIIDSSR…GVIEKLSSRF (176 aa)). Position 198 is an omega-N-methylarginine (arginine 198). EGF-like domains are found at residues 264-305 (ALDP…KTCS), 306-347 (ALDR…KTCS), 348-389 (AQDK…KTCS), and 390-431 (VRDK…KTCS). 12 cysteine pairs are disulfide-bonded: cysteine 268/cysteine 279, cysteine 275/cysteine 289, cysteine 291/cysteine 304, cysteine 310/cysteine 321, cysteine 317/cysteine 331, cysteine 333/cysteine 346, cysteine 352/cysteine 363, cysteine 359/cysteine 373, cysteine 375/cysteine 388, cysteine 394/cysteine 405, cysteine 401/cysteine 415, and cysteine 417/cysteine 430. Phosphoserine; by FAM20C is present on serine 441. Position 442 is a phosphothreonine; by FAM20C (threonine 442). A coiled-coil region spans residues 456-480 (DKVSSYLQRLNTKLDDILEKLKINE).

Can form homooligomers (monomers, dimers, trimers and tetramers) and heterooligomers with matrilin-1. Interacts with COMP. Component of a complex containing at least CRELD2, MANF, MATN3 and PDIA4. As to expression, expressed only in cartilaginous tissues, such as vertebrae, ribs and shoulders.

Its subcellular location is the secreted. Its function is as follows. Major component of the extracellular matrix of cartilage and may play a role in the formation of extracellular filamentous networks. The protein is Matrilin-3 (MATN3) of Homo sapiens (Human).